The sequence spans 417 residues: Phosphoglycerate kinase (417 aa).

Residues V23, D24, F25, N26, Q38, R39, S62, H63, G65, R66, L121, R122, H169, and R170 each contribute to the (2R)-3-phosphoglycerate site. Position 213 (G213) interacts with ADP. Position 213 (G213) interacts with CDP. 2 residues coordinate AMP: A214 and K215. A214 provides a ligand contact to ATP. A Mg(2+)-binding site is contributed by A214. D218 contributes to the CDP binding site. D218 contacts Mg(2+). K219 contributes to the AMP binding site. ATP is bound at residue K219. G237 provides a ligand contact to ADP. G237 contributes to the CDP binding site. Positions 238 and 312 each coordinate AMP. 2 residues coordinate ATP: G238 and G312. CDP-binding residues include G337 and F342. Residue F342 participates in ADP binding. E343 serves as a coordination point for AMP. ATP-binding residues include E343, D374, and T375. Residue D374 participates in Mg(2+) binding.

It belongs to the phosphoglycerate kinase family. In terms of assembly, monomer. The cofactor is Mg(2+).

The protein resides in the cytoplasm. It is found in the mitochondrion. It carries out the reaction (2R)-3-phosphoglycerate + ATP = (2R)-3-phospho-glyceroyl phosphate + ADP. It functions in the pathway carbohydrate degradation; glycolysis; pyruvate from D-glyceraldehyde 3-phosphate: step 2/5. Functionally, catalyzes one of the two ATP producing reactions in the glycolytic pathway via the reversible conversion of 1,3-diphosphoglycerate to 3-phosphoglycerate. Both L- and D- forms of purine and pyrimidine nucleotides can be used as substrates, but the activity is much lower on pyrimidines. Negatively regulates the biosynthesis of acetyl-CoA from pyruvate in the mitochondrion. The polypeptide is Phosphoglycerate kinase (PGK1) (Candida maltosa (Yeast)).